Reading from the N-terminus, the 1197-residue chain is Disease resistance-like protein CSA1 (1197 aa).

A TIR domain is found at 15–178 (PQDQVFINFR…IIIRKVKEIL (164 aa)). E89 is a catalytic residue. An NB-ARC domain is found at 210–480 (RIKQLEEKLR…ACFRSQDENY (271 aa)). LRR repeat units lie at residues 614–636 (LNEVRYLHWLKFPLKEVPQDFNP), 638–659 (NLVDLKLPYSEIERVWEDNKDA), 694–716 (TALKEMHVDMENMKFLVFLNLRG), 728–749 (LISLKTLILSGCSKFKTFQVIS), 750–774 (DKLEALYLDGTAIKELPCDIGRLQR), 776–796 (VMLNMKGCKKLKRLPDSLGQL), 797–819 (KALEELILSGCSKLNEFPETWGN), 820–843 (MSRLEILLLDETAIKDMPKILSVR), 845–862 (LCLNKNEKISRLPDLLNK), and 863–889 (FSQLQWLHLKYCKNLTHVPQLPPNLQY).

The catalysed reaction is NAD(+) + H2O = ADP-D-ribose + nicotinamide + H(+). TIR-NB-LRR receptor-like protein that functions in photomorphogenic development. May function downstream of phytochrome B (phyB) signaling. The chain is Disease resistance-like protein CSA1 from Arabidopsis thaliana (Mouse-ear cress).